Here is a 346-residue protein sequence, read N- to C-terminus: Endo-1,4-beta-xylanase B (346 aa).

The first 19 residues, 1 to 19 (MKGLPALLLLLIGCVSSFG), serve as a signal peptide directing secretion. One can recognise a GH10 domain in the interval 41-338 (GNNFWSLPDA…KPCYFAIREL (298 aa)). The active-site Proton donor is the glutamate 153. The Nucleophile role is filled by glutamate 259.

Belongs to the glycosyl hydrolase 10 (cellulase F) family.

The catalysed reaction is Endohydrolysis of (1-&gt;4)-beta-D-xylosidic linkages in xylans.. This chain is Endo-1,4-beta-xylanase B (xynB), found in Thermotoga neapolitana.